Consider the following 196-residue polypeptide: Nucleoside triphosphate pyrophosphatase (196 aa).

The active-site Proton acceptor is the D73.

Belongs to the Maf family. Requires a divalent metal cation as cofactor.

Its subcellular location is the cytoplasm. It catalyses the reaction a ribonucleoside 5'-triphosphate + H2O = a ribonucleoside 5'-phosphate + diphosphate + H(+). The enzyme catalyses a 2'-deoxyribonucleoside 5'-triphosphate + H2O = a 2'-deoxyribonucleoside 5'-phosphate + diphosphate + H(+). Nucleoside triphosphate pyrophosphatase. May have a dual role in cell division arrest and in preventing the incorporation of modified nucleotides into cellular nucleic acids. This is Nucleoside triphosphate pyrophosphatase from Chlamydia pneumoniae (Chlamydophila pneumoniae).